The chain runs to 370 residues: Anhydro-N-acetylmuramic acid kinase (370 aa).

12 to 19 contacts ATP; it reads GTSLDGVD.

This sequence belongs to the anhydro-N-acetylmuramic acid kinase family.

It catalyses the reaction 1,6-anhydro-N-acetyl-beta-muramate + ATP + H2O = N-acetyl-D-muramate 6-phosphate + ADP + H(+). Its pathway is amino-sugar metabolism; 1,6-anhydro-N-acetylmuramate degradation. The protein operates within cell wall biogenesis; peptidoglycan recycling. Its function is as follows. Catalyzes the specific phosphorylation of 1,6-anhydro-N-acetylmuramic acid (anhMurNAc) with the simultaneous cleavage of the 1,6-anhydro ring, generating MurNAc-6-P. Is required for the utilization of anhMurNAc either imported from the medium or derived from its own cell wall murein, and thus plays a role in cell wall recycling. The chain is Anhydro-N-acetylmuramic acid kinase from Pectobacterium carotovorum subsp. carotovorum (strain PC1).